Reading from the N-terminus, the 577-residue chain is Proton channel OTOP3 (577 aa).

Positions 1–46 (MASQTSAPAEPAPMPSPEAKTTEGASSYDQADMETKHAGSPCPPKQ) are disordered. Over 1-69 (MASQTSAPAE…RDRQAQKAGQ (69 aa)) the chain is Cytoplasmic. Residues 70-90 (LFSGLLALNVVFLGGAFICSM) traverse the membrane as a helical segment. Residues 91–100 (IFNKVSVTLG) are Extracellular-facing. Residues 101–124 (DVWILLAALKVLSLLWLLYYTVGT) traverse the membrane as a helical segment. Over 125–140 (TRKPHAVLYRDPHAGP) the chain is Cytoplasmic. A helical membrane pass occupies residues 141–162 (IWVRGSLVLFGSCTVCLNIFRM). At 163–174 (GYDVSHIHCKSE) the chain is on the extracellular side. Residues 175–198 (VELIFPAIEIVFMIIQTWVLWRHC) traverse the membrane as a helical segment. Over 199 to 206 (KDCVQVQT) the chain is Cytoplasmic. A helical membrane pass occupies residues 207–229 (NFTRCGLMLTLATNLLMWVLAVT). Residues 230–276 (NDSMHREIEAELDALMEKFSGNGTNTCMCLNTTVCEVFRKGYLMLYP) are Extracellular-facing. A helical membrane pass occupies residues 277–293 (FSTEYCLICCAVLFVMW). The Cytoplasmic portion of the chain corresponds to 294-319 (KNVSRSLAAHTGAHPNRSPFRLHGTI). Residues 320-339 (FGPLLGLLALVAGVCVFVLF) form a helical membrane-spanning segment. At 340–353 (QIEASGPDIARQYF) the chain is on the extracellular side. Residues 354 to 376 (TLYYAFYVAVLPTMSLACLAGTA) form a helical membrane-spanning segment. The Cytoplasmic segment spans residues 377–394 (IHGLEERELDTLKNPTRS). A helical transmembrane segment spans residues 395 to 416 (LDVVLLMGAALGQMGIAYFSIV). Residues 417–427 (AIVATQPHELL) are Extracellular-facing. The chain crosses the membrane as a helical span at residues 428–450 (NQLILAYSLLLILQHITQNLFII). The Cytoplasmic segment spans residues 451–510 (EGLHRRPLWEPAVSGVMEKQDVELPRRGSLRELGQDLRRASRAYIHSFSHLNWKRRMLKE). Residues 511–528 (ISLFLILCNITLWMMPAF) traverse the membrane as a helical segment. Over 529-547 (GIHPEFENGLEKDFYGYRT) the chain is Extracellular. A helical membrane pass occupies residues 548–570 (WFTIVNFGLPLGVFYRMHSVGGL). The Cytoplasmic segment spans residues 571-577 (VEVYLGA).

This sequence belongs to the otopetrin family. In terms of assembly, homodimer. As to expression, expressed in epidermis, small intestine, stomach and retina.

It localises to the cell membrane. It carries out the reaction H(+)(in) = H(+)(out). Its activity is regulated as follows. Activated by extracellular acidification. Activated by Zn(2+) under non-acidic conditions. Its function is as follows. Proton-selective channel gated by extracellular protons. This chain is Proton channel OTOP3, found in Mus musculus (Mouse).